The following is a 206-amino-acid chain: Large ribosomal subunit protein uL13z (206 aa).

Belongs to the universal ribosomal protein uL13 family.

The polypeptide is Large ribosomal subunit protein uL13z (RPL13AA) (Arabidopsis thaliana (Mouse-ear cress)).